We begin with the raw amino-acid sequence, 565 residues long: NAD-dependent malic enzyme (565 aa).

Y104 serves as the catalytic Proton donor. NAD(+) is bound at residue R157. K175 (proton acceptor) is an active-site residue. The a divalent metal cation site is built by E246, D247, and D270. Positions 270 and 418 each coordinate NAD(+).

The protein belongs to the malic enzymes family. In terms of assembly, homotetramer. Mg(2+) serves as cofactor. The cofactor is Mn(2+).

It carries out the reaction (S)-malate + NAD(+) = pyruvate + CO2 + NADH. The catalysed reaction is oxaloacetate + H(+) = pyruvate + CO2. The chain is NAD-dependent malic enzyme from Klebsiella pneumoniae (strain 342).